The following is an 86-amino-acid chain: uncharacterized protein (86 aa).

This is an uncharacterized protein from Ovis aries (Sheep).